The sequence spans 414 residues: MASISETSDDGSNGGVPNQKPEEPHKNPQEEKENQNENPNEADEEDDHQDEEVENVPPIPRKIPPVLIENTIAPLRRCHYPKLSLLSNAFRQVISSEDLFQVRSLIGSTEPVLYTLITFKYPTFEEGRWFILQRRNNTSLKLNCVTSLPPMFLGCTAVTIGHKIYVVGGYNFRYNKTISTVLEIDCRFNTCRHLRNMKRDRCSAVAGVIDGRIYVVAGRQRRFDDWVEVFDVETERWELVPGPFSSFASSSGKFIVHVVLDNKIYIMDGDYCFAYDPRRRRWETWGPESAQRSYWHLSSCVVDDLLYAIVPREIFGASIVVYDPRGIAWRPVMGLEFWPNLVYFESKMANFGGKLVILGCYRSSFDYYRKDVWCVEVALEKHEDGQIWGKVESLSLVNAFPMSPFFELSRTVTI.

A disordered region spans residues 1 to 61 (MASISETSDD…EVENVPPIPR (61 aa)). Over residues 20–35 (KPEEPHKNPQEEKENQ) the composition is skewed to basic and acidic residues. Over residues 40-54 (NEADEEDDHQDEEVE) the composition is skewed to acidic residues. The F-box domain maps to 58–105 (PIPRKIPPVLIENTIAPLRRCHYPKLSLLSNAFRQVISSEDLFQVRSL). Kelch repeat units lie at residues 163–211 (KIYV…VIDG), 212–258 (RIYV…IVHV), 263–302 (KIYI…SCVV), and 305–349 (LLYA…SKMA).

This is Putative F-box/kelch-repeat protein At2g29800 from Arabidopsis thaliana (Mouse-ear cress).